Reading from the N-terminus, the 356-residue chain is D-alanine--D-alanine ligase (356 aa).

Residues 134–339 enclose the ATP-grasp domain; sequence KQLFEHRGLP…YPELITKLIE (206 aa). 167 to 222 is an ATP binding site; sequence NDKLNYPVFVKPANLGSSVGISKCNNEAELKEGIKEAFQFDRKLVIEQGVNAREIE. Positions 293, 306, and 308 each coordinate Mg(2+).

It belongs to the D-alanine--D-alanine ligase family. Mg(2+) serves as cofactor. Requires Mn(2+) as cofactor.

It localises to the cytoplasm. The catalysed reaction is 2 D-alanine + ATP = D-alanyl-D-alanine + ADP + phosphate + H(+). The protein operates within cell wall biogenesis; peptidoglycan biosynthesis. Its function is as follows. Cell wall formation. This is D-alanine--D-alanine ligase from Staphylococcus aureus (strain MSSA476).